The chain runs to 522 residues: Major facilitator-type transporter sorT (522 aa).

Residues 1–21 (MSHTEPKAPVNTGEVENGHLY) form a disordered region. The next 12 membrane-spanning stretches (helical) occupy residues 52–72 (WFIA…SSAY), 89–109 (VFIV…AVWA), 121–141 (QILW…SAGS), 143–163 (NVAT…SPLV), 183–203 (TIYC…GGFV), 211–231 (WVQG…IVFI), 280–300 (WIFL…AIIY), 324–344 (IGGL…VYAI), 366–386 (LPPA…FAWT), 395–415 (VSII…LPIM), 427–447 (ASVL…FPLF), and 457–477 (IHWA…FPLI).

The protein belongs to the major facilitator superfamily. Sugar transporter (TC 2.A.1.1) family.

Its subcellular location is the membrane. Major facilitator-type transporter; part of the gene cluster that mediates the biosynthesis of sorbicillinoids, a diverse group of yellow secondary metabolites that restrict growth of competing pathogenic fungi but not of bacteria. This chain is Major facilitator-type transporter sorT, found in Penicillium rubens (strain ATCC 28089 / DSM 1075 / NRRL 1951 / Wisconsin 54-1255) (Penicillium chrysogenum).